Reading from the N-terminus, the 341-residue chain is Phosphate acyltransferase (341 aa).

The protein belongs to the PlsX family. In terms of assembly, homodimer. Probably interacts with PlsY.

It is found in the cytoplasm. The enzyme catalyses a fatty acyl-[ACP] + phosphate = an acyl phosphate + holo-[ACP]. It participates in lipid metabolism; phospholipid metabolism. Its function is as follows. Catalyzes the reversible formation of acyl-phosphate (acyl-PO(4)) from acyl-[acyl-carrier-protein] (acyl-ACP). This enzyme utilizes acyl-ACP as fatty acyl donor, but not acyl-CoA. The polypeptide is Phosphate acyltransferase (Lacticaseibacillus casei (strain BL23) (Lactobacillus casei)).